Consider the following 392-residue polypeptide: Na(+)/H(+) antiporter NhaA 2 (392 aa).

A run of 11 helical transmembrane segments spans residues 20–40, 61–81, 99–119, 127–147, 158–178, 181–201, 209–229, 265–285, 298–318, 336–356, and 365–385; these read FFAA…AALI, LSVS…LVGL, ALPG…YVAF, IGGW…VLSL, IFLS…IALF, SDLS…LVAL, LLPY…SGIH, VAFA…LSGI, VALG…ALAI, GVAA…ALAF, and EVKV…VVVL.

Belongs to the NhaA Na(+)/H(+) (TC 2.A.33) antiporter family.

It localises to the cell inner membrane. It catalyses the reaction Na(+)(in) + 2 H(+)(out) = Na(+)(out) + 2 H(+)(in). In terms of biological role, na(+)/H(+) antiporter that extrudes sodium in exchange for external protons. The polypeptide is Na(+)/H(+) antiporter NhaA 2 (Pseudomonas syringae pv. syringae (strain B728a)).